The following is a 214-amino-acid chain: Nodulation protein A (214 aa).

The protein belongs to the NodA family.

The protein resides in the cytoplasm. N-acyltransferase required for nodulation. Acts in the production of a small, heat-stable compound (Nod) that stimulates mitosis in various plant protoplasts. The chain is Nodulation protein A from Methylobacterium nodulans (strain LMG 21967 / CNCM I-2342 / ORS 2060).